The chain runs to 138 residues: Oleosin G (138 aa).

3 consecutive transmembrane segments (helical) span residues 14–34 (ILGFITLFVSGAVLLFLTGLT), 48–68 (VLIFFSPILIPLATVLFVAVA), and 69–89 (GFLSAGGFGLAALSAISWLYN). Positions 47-58 (PVLIFFSPILIP) match the Proline-knot motif.

Belongs to the oleosin family. As to expression, expressed in megagametophytes (at protein level).

It is found in the lipid droplet. The protein localises to the membrane. The protein is Oleosin G of Pinus massoniana (Chinese red pine).